Reading from the N-terminus, the 428-residue chain is MSSIIDVYAREVLDSRGNPTVEVEVYTEAGAMGSAIVPSGASTGVHEAVELRDNDEKRFLGKGVETAVDNVNLEIADELVGWDVFDQVGIDNYLIELDGTENKSRLGANAILGVSLAVAKAAADENGQRLFEYIGGVNGKTLPVPMMNILNGGQHADNNVDIQEFMIMPVGGENFKESLRIGTEVFHNLKNVLKSRKLNTAVGDEGGFAPNLESNEEALQTIVEAIKKAGYEPGKDVMIAIDAAASEFYEDGKYNMAGDNAVRTSDEMIEYYKNLVEKYPIISIEDGLAEDDWDGWKKLTQELGSKIQLVGDDLFVTNVKRLQKGIEMGVCNSILIKLNQIGTLTETLDAIELAKRHGYTAVISHRSGETEDTTIADVAVATNAGQIKTGSTSRTDRICKYNQLLRIEDMLESTAVYDGIKTFYNLSK.

(2R)-2-phosphoglycerate is bound at residue Gln163. The Proton donor role is filled by Glu205. Mg(2+) contacts are provided by Asp242, Glu285, and Asp312. (2R)-2-phosphoglycerate contacts are provided by Lys337, Arg366, Ser367, and Lys388. Lys337 functions as the Proton acceptor in the catalytic mechanism.

It belongs to the enolase family. It depends on Mg(2+) as a cofactor.

The protein localises to the cytoplasm. It is found in the secreted. The protein resides in the cell surface. The catalysed reaction is (2R)-2-phosphoglycerate = phosphoenolpyruvate + H2O. The protein operates within carbohydrate degradation; glycolysis; pyruvate from D-glyceraldehyde 3-phosphate: step 4/5. Its function is as follows. Catalyzes the reversible conversion of 2-phosphoglycerate (2-PG) into phosphoenolpyruvate (PEP). It is essential for the degradation of carbohydrates via glycolysis. The polypeptide is Enolase (Finegoldia magna (strain ATCC 29328 / DSM 20472 / WAL 2508) (Peptostreptococcus magnus)).